Reading from the N-terminus, the 186-residue chain is Large ribosomal subunit protein bL9 (186 aa).

A compositionally biased stretch (basic and acidic residues) spans Pro151–Glu167. The disordered stretch occupies residues Pro151–Ala186. A compositionally biased stretch (acidic residues) spans Ser168 to Glu180.

This sequence belongs to the bacterial ribosomal protein bL9 family.

Its function is as follows. Binds to the 23S rRNA. The polypeptide is Large ribosomal subunit protein bL9 (Acidiphilium cryptum (strain JF-5)).